The following is a 565-amino-acid chain: DNA-directed RNA polymerase subunit beta C-terminal section (565 aa).

Belongs to the RNA polymerase beta chain family. In plastids the minimal PEP RNA polymerase catalytic core is composed of four subunits: alpha, beta, beta', and beta''. When a (nuclear-encoded) sigma factor is associated with the core the holoenzyme is formed, which can initiate transcription.

The protein resides in the plastid. It is found in the chloroplast. The enzyme catalyses RNA(n) + a ribonucleoside 5'-triphosphate = RNA(n+1) + diphosphate. DNA-dependent RNA polymerase catalyzes the transcription of DNA into RNA using the four ribonucleoside triphosphates as substrates. This Tetradesmus obliquus (Green alga) protein is DNA-directed RNA polymerase subunit beta C-terminal section (rpoB2).